The primary structure comprises 169 residues: Der GTPase-activating protein YihI (169 aa).

2 disordered regions span residues 1–99 (MKPS…QAEL) and 146–169 (SYDD…LRGN). A compositionally biased stretch (basic residues) spans 10–19 (SKGHAKARRK). Positions 20–30 (TREELDQEARD) are enriched in basic and acidic residues. Residues 31–40 (RKRQKKRRGH) are compositionally biased toward basic residues. Positions 49 to 58 (GNTTSGSKGQ) are enriched in polar residues. Over residues 147–159 (YDDDEEEEEDEKQ) the composition is skewed to acidic residues. A compositionally biased stretch (basic and acidic residues) spans 160 to 169 (EDMMRLLRGN).

This sequence belongs to the YihI family. Interacts with Der.

Functionally, a GTPase-activating protein (GAP) that modifies Der/EngA GTPase function. May play a role in ribosome biogenesis. The polypeptide is Der GTPase-activating protein YihI (Escherichia coli O45:K1 (strain S88 / ExPEC)).